Reading from the N-terminus, the 229-residue chain is AA9 family lytic polysaccharide monooxygenase E (229 aa).

The N-terminal stretch at 1 to 19 (MRSSDITFVLLSVVATVRS) is a signal peptide. Histidine 20 contacts Cu(2+). Cysteines 57 and 178 form a disulfide. Residue asparagine 76 is glycosylated (N-linked (GlcNAc...) asparagine). Histidine 99 contacts Cu(2+). Residues histidine 164 and glutamine 173 each coordinate O2. Tyrosine 175 contacts Cu(2+). Asparagine 217 is a glycosylation site (N-linked (GlcNAc...) asparagine).

It belongs to the polysaccharide monooxygenase AA9 family. Cu(2+) is required as a cofactor.

It is found in the secreted. The enzyme catalyses [(1-&gt;4)-beta-D-glucosyl]n+m + reduced acceptor + O2 = 4-dehydro-beta-D-glucosyl-[(1-&gt;4)-beta-D-glucosyl]n-1 + [(1-&gt;4)-beta-D-glucosyl]m + acceptor + H2O.. Its function is as follows. Lytic polysaccharide monooxygenase (LPMO) that depolymerizes crystalline and amorphous polysaccharides via the oxidation of scissile alpha- or beta-(1-4)-glycosidic bonds, yielding C1 and C4 oxidation products. Catalysis by LPMOs requires the reduction of the active-site copper from Cu(II) to Cu(I) by a reducing agent and H(2)O(2) or O(2) as a cosubstrate. In Botryotinia fuckeliana (strain B05.10) (Noble rot fungus), this protein is AA9 family lytic polysaccharide monooxygenase E.